We begin with the raw amino-acid sequence, 127 residues long: MSNTPVELKYTESHEWVRTEADGTLTIGITDLAQEQLGDIVFLELPDTGRQVKQGEAIAVVESVKAASDIYAPVSGEVIASNADATESPESVNEDAYDAWLFKIKPANADDVNALLSADQYQAKAGA.

Residues 24 to 105 (TLTIGITDLA…AYDAWLFKIK (82 aa)) form the Lipoyl-binding domain. The residue at position 65 (lysine 65) is an N6-lipoyllysine.

It belongs to the GcvH family. As to quaternary structure, the glycine cleavage system is composed of four proteins: P, T, L and H. It depends on (R)-lipoate as a cofactor.

In terms of biological role, the glycine cleavage system catalyzes the degradation of glycine. The H protein shuttles the methylamine group of glycine from the P protein to the T protein. This is Glycine cleavage system H protein from Ralstonia nicotianae (strain ATCC BAA-1114 / GMI1000) (Ralstonia solanacearum).